Consider the following 800-residue polypeptide: Heterogeneous nuclear ribonucleoprotein U (800 aa).

Ser-2 carries the N-acetylserine modification. Phosphoserine is present on Ser-4. The SAP domain occupies Val-8–Leu-42. Lys-17 and Lys-21 each carry N6-acetyllysine. Residues Ala-41–Glu-257 are disordered. Ser-58 bears the Phosphoserine mark. Low complexity-rich tracts occupy residues Ala-71–Gly-80 and Glu-103–Gly-113. Composition is skewed to acidic residues over residues Ala-114–Asp-128 and Glu-134–Gly-147. Residues Gly-153 to Gly-173 are compositionally biased toward low complexity. Lys-181 bears the N6-acetyllysine mark. Ser-182 carries the ADP-ribosylserine modification. Low complexity predominate over residues Ala-194–Ala-205. The segment covering Gly-209–Tyr-242 has biased composition (basic and acidic residues). The residue at position 231 (Arg-231) is a Citrulline. Residue Lys-241 is modified to N6-acetyllysine; alternate. A Glycyl lysine isopeptide (Lys-Gly) (interchain with G-Cter in SUMO1); alternate cross-link involves residue Lys-241. A Glycyl lysine isopeptide (Lys-Gly) (interchain with G-Cter in SUMO2); alternate cross-link involves residue Lys-241. Tyr-242 is subject to Phosphotyrosine. Phosphoserine is present on residues Ser-243 and Ser-247. One can recognise a B30.2/SPRY domain in the interval Arg-244 to Lys-440. Thr-262 carries the post-translational modification Phosphothreonine. Lys-328 is modified (N6-acetyllysine). Residues Pro-464 to Glu-648 are ATPase domain. A Glycyl lysine isopeptide (Lys-Gly) (interchain with G-Cter in SUMO2) cross-link involves residue Lys-471. Gly-480–Thr-487 is a binding site for ATP. An N6-acetyllysine; alternate mark is found at Lys-492 and Lys-500. Residues Lys-492 and Lys-500 each participate in a glycyl lysine isopeptide (Lys-Gly) (interchain with G-Cter in SUMO2); alternate cross-link. Thr-508 carries the phosphothreonine modification. Residue Lys-512 forms a Glycyl lysine isopeptide (Lys-Gly) (interchain with G-Cter in SUMO2) linkage. Lys-527 bears the N6-acetyllysine mark. Residue Lys-541 is modified to N6-acetyllysine; alternate. Lys-541 participates in a covalent cross-link: Glycyl lysine isopeptide (Lys-Gly) (interchain with G-Cter in SUMO2); alternate. Lys-550 is covalently cross-linked (Glycyl lysine isopeptide (Lys-Gly) (interchain with G-Cter in SUMO2)). Thr-558 carries the post-translational modification Phosphothreonine. Glycyl lysine isopeptide (Lys-Gly) (interchain with G-Cter in SUMO2) cross-links involve residues Lys-585 and Lys-602. Residues Glu-587–Lys-602 are actin-binding. The residue at position 611 (Lys-611) is an N6-acetyllysine; alternate. A Glycyl lysine isopeptide (Lys-Gly) (interchain with G-Cter in SUMO2); alternate cross-link involves residue Lys-611. A coiled-coil region spans residues Asp-626–Leu-653. Residues Lys-640 and Lys-646 each participate in a glycyl lysine isopeptide (Lys-Gly) (interchain with G-Cter in SUMO2) cross-link. Residues Glu-647–Gln-659 show a composition bias toward basic and acidic residues. The tract at residues Glu-647–Pro-729 is disordered. Omega-N-methylarginine is present on Arg-678. Gly residues predominate over residues Gly-686 to Gly-704. The tract at residues Met-690–Arg-715 is RNA-binding RGG-box. Arg-691, Arg-696, and Arg-703 each carry asymmetric dimethylarginine. Asymmetric dimethylarginine; alternate is present on residues Arg-709 and Arg-715. An omega-N-methylarginine; alternate mark is found at Arg-709 and Arg-715. Residues Arg-715–Gly-725 show a composition bias toward gly residues. 2 positions are modified to asymmetric dimethylarginine: Arg-730 and Arg-737. Residues Asn-745 to Ser-774 form a disordered region. Position 789 is an N6-acetyllysine; alternate (Lys-789). A Glycyl lysine isopeptide (Lys-Gly) (interchain with G-Cter in SUMO2); alternate cross-link involves residue Lys-789.

In terms of assembly, oligomer (via ATPase domain and RNA-binding RGG-box region); oligomerization occurs upon ATP-binding in a chromatin-associated RNAs (caRNAs)- and transcription-dependent manner and is required for chromatin decompaction. ATP hydrolysis is required to cycle from an oligomeric to monomeric state to compact chromatin. Component of the coding region determinant (CRD)-mediated complex, composed of DHX9, HNRNPU, IGF2BP1, SYNCRIP and YBX1. Identified in the spliceosome C complex. Identified in a IGF2BP1-dependent mRNP granule complex containing untranslated mRNAs. Associates with heterogeneous nuclear ribonucleoprotein (hnRNP) particles. Associates (via middle region) with the C-terminal domain (CTD) RNA polymerase II (Pol II) holoenzyme; this association occurs in a RNA-independent manner. Associates (via middle region) with the core-TFIIH basal transcription factor complex; this association inhibits the CTD phosphorylation of RNA polymerase II holoenzyme by down-regulating TFIIH kinase activity. Associates with the telomerase holoenzyme complex. Associates with spindle microtubules (MTs) in a TPX2-dependent manner. Interacts (via C-terminus) with actin; this interaction is direct and mediates association with the phosphorylated CTD of RNA polymerase II and is disrupted in presence of the long non-coding H19 RNA. Interacts with AURKA. Interacts (via C-terminus) with CBX5; this interaction is, at least in part, RNA-dependent. Interacts with CR2. Interacts with CRY1. Interacts (via C-terminus) with EP300; this interaction enhances DNA-binding to nuclear scaffold/matrix attachment region (S/MAR) elements. Interacts with ERBB4. Interacts with GEMIN5. Interacts with IGF2BP1. Interacts with IGF2BP2 and IGF2BP3. Interacts with NCL; this interaction occurs during mitosis. Interacts (via C-terminus) with NR3C1 (via C-terminus). Interacts with PLK1; this interaction induces phosphorylation of HNRNPU at Ser-58 in mitosis. Interacts with POU3F4. Interacts with SMARCA4; this interaction occurs in embryonic stem cells and stimulates global Pol II-mediated transcription. Interacts (via C-terminus) with TOP2A; this interaction protects the topoisomerase TOP2A from degradation and positively regulates the relaxation of supercoiled DNA by TOP2A in a RNA-dependent manner. Interacts with TPX2; this interaction recruits HNRNPU to spindle microtubules (MTs). Interacts with UBQLN2. Interacts (via RNA-binding RGG-box region) with ZBTB7B; the interaction facilitates the recruitment of long non-coding RNA Blnc1 by ZBTB7B. Interacts with ERCC6. Post-translationally, cleaved at Asp-94 by CASP3 during T-cell apoptosis, resulting in a loss of DNA- and chromatin-binding activities. Extensively phosphorylated. Phosphorylated on Ser-58 by PLK1 and dephosphorylated by protein phosphatase 2A (PP2A) in mitosis. In terms of processing, arg-709 and Arg-715 are dimethylated, probably to asymmetric dimethylarginine. Post-translationally, citrullinated by PADI4.

The protein resides in the nucleus. It localises to the nucleus matrix. Its subcellular location is the chromosome. The protein localises to the nucleus speckle. It is found in the cytoplasm. The protein resides in the cytoskeleton. It localises to the microtubule organizing center. Its subcellular location is the centrosome. The protein localises to the centromere. It is found in the kinetochore. The protein resides in the spindle. It localises to the spindle pole. Its subcellular location is the midbody. The protein localises to the cell surface. It is found in the cytoplasmic granule. Functionally, DNA- and RNA-binding protein involved in several cellular processes such as nuclear chromatin organization, telomere-length regulation, transcription, mRNA alternative splicing and stability, Xist-mediated transcriptional silencing and mitotic cell progression. Plays a role in the regulation of interphase large-scale gene-rich chromatin organization through chromatin-associated RNAs (caRNAs) in a transcription-dependent manner, and thereby maintains genomic stability. Required for the localization of the long non-coding Xist RNA on the inactive chromosome X (Xi) and the subsequent initiation and maintenance of X-linked transcriptional gene silencing during X-inactivation. Plays a role as a RNA polymerase II (Pol II) holoenzyme transcription regulator. Promotes transcription initiation by direct association with the core-TFIIH basal transcription factor complex for the assembly of a functional pre-initiation complex with Pol II in a actin-dependent manner. Blocks Pol II transcription elongation activity by inhibiting the C-terminal domain (CTD) phosphorylation of Pol II and dissociates from Pol II pre-initiation complex prior to productive transcription elongation. Positively regulates CBX5-induced transcriptional gene silencing and retention of CBX5 in the nucleus. Negatively regulates glucocorticoid-mediated transcriptional activation. Key regulator of transcription initiation and elongation in embryonic stem cells upon leukemia inhibitory factor (LIF) signaling. Involved in the long non-coding RNA H19-mediated Pol II transcriptional repression. Participates in the circadian regulation of the core clock component BMAL1 transcription. Plays a role in the regulation of telomere length. Plays a role as a global pre-mRNA alternative splicing modulator by regulating U2 small nuclear ribonucleoprotein (snRNP) biogenesis. Plays a role in mRNA stability. Component of the CRD-mediated complex that promotes MYC mRNA stabilization. Enhances the expression of specific genes, such as tumor necrosis factor TNFA, by regulating mRNA stability, possibly through binding to the 3'-untranslated region (UTR). Plays a role in mitotic cell cycle regulation. Involved in the formation of stable mitotic spindle microtubules (MTs) attachment to kinetochore, spindle organization and chromosome congression. Phosphorylation at Ser-58 by PLK1 is required for chromosome alignement and segregation and progression through mitosis. Also contributes to the targeting of AURKA to mitotic spindle MTs. Binds to double- and single-stranded DNA and RNA, poly(A), poly(C) and poly(G) oligoribonucleotides. Binds to chromatin-associated RNAs (caRNAs). Associates with chromatin to scaffold/matrix attachment region (S/MAR) elements in a chromatin-associated RNAs (caRNAs)-dependent manner. Binds (via RNA-binding RGG-box region) to the long non-coding Xist RNA; this binding is direct and bridges the Xist RNA and the inactive chromosome X (Xi). Binds the long non-coding H19 RNA. Binds to SMN1/2 pre-mRNAs at G/U-rich regions. Binds to small nuclear RNAs (snRNAs). Binds to the 3'-UTR of TNFA mRNA. Also negatively regulates embryonic stem cell differentiation upon LIF signaling. Required for embryonic development. Binds to brown fat long non-coding RNA 1 (Blnc1); facilitates the recruitment of Blnc1 by ZBTB7B required to drive brown and beige fat development and thermogenesis. This Mus musculus (Mouse) protein is Heterogeneous nuclear ribonucleoprotein U.